We begin with the raw amino-acid sequence, 1344 residues long: Period circadian protein homolog 2 (1344 aa).

Disordered stretches follow at residues 1 to 21 and 42 to 112; these read MDCIEVRGFYSSTEEQNPEQQ and EYSG…NGKD. Residues 10–21 show a composition bias toward polar residues; it reads YSSTEEQNPEQQ. Over residues 78–89 the composition is skewed to low complexity; sequence SSGSSGNDFSGN. Basic and acidic residues predominate over residues 99-111; that stretch reads HDSHGHESDENGK. The Nuclear export signal 1 signature appears at 161 to 170; sequence LLKTLQELKA. The PAS 1 domain occupies 231-298; sequence ITSEYIMKNA…FYTSTTPYRL (68 aa). An LXXLL motif is present at residues 358-362; sequence LCCVL. Residues 371–437 form the PAS 2 domain; sequence YEAPRIPPDK…MLAIHKKILQ (67 aa). One can recognise a PAC domain in the interval 445-488; sequence YSPIRFCTRNGDYITMDTSWSSFINPWSRKVSFIIGRHKVRTGP. A Nuclear export signal 2 motif is present at residues 512–521; the sequence is ITEQIYRLLL. 5 disordered regions span residues 531–609, 661–686, 823–894, 1038–1065, and 1107–1126; these read GYGS…QVKD, AKRKCEPSSSVNSSVHEQKASVNAIQ, LQDK…WSPS, TETRNEPSRSCTPQSVGPQDQASPPLFQ, and TTDAGSGKGSLPAESPMDAQ. Over residues 549–559 the composition is skewed to low complexity; the sequence is SSSDSTGNNND. Basic and acidic residues-rich tracts occupy residues 560–573 and 583–597; these read DTQKDKTISQDARK and TENKGKLEYKREPSA. Positions 667 to 684 are enriched in polar residues; the sequence is PSSSVNSSVHEQKASVNA. A compositionally biased stretch (basic and acidic residues) spans 825–836; sequence DKPKGRPGERGG. Residues 851–865 carry the Nuclear localization signal motif; the sequence is KKSGKNRKSKRIKPQ. A compositionally biased stretch (basic residues) spans 852 to 862; the sequence is KSGKNRKSKRI. 3 stretches are compositionally biased toward polar residues: residues 865–875, 885–894, and 1045–1059; these read QESSDSTTSGT, GLNTTAWSPS, and SRSCTPQSVGPQDQA. The short motif at 1138–1142 is the LXXLL element; the sequence is LDILL. Positions 1149–1172 are enriched in low complexity; it reads GTGSASSGSGVSAAAESLGSGSNG. The tract at residues 1149–1197 is disordered; it reads GTGSASSGSGVSAAAESLGSGSNGCDMSGSRTGSSETSHTSKYFGSIDS. Residues 1177 to 1197 are compositionally biased toward polar residues; that stretch reads GSRTGSSETSHTSKYFGSIDS. The CRY binding domain stretch occupies residues 1244 to 1344; it reads SRDLETVLKE…PLSQVNEEQT (101 aa).

Component of the circadian clock oscillator which includes the CRY proteins, CLOCK or NPAS2, BMAL1 or BMAL2, CSNK1E, and the PER proteins. Interacts directly with PER3, and through a C-terminal domain, with CRY1 and CRY2.

The protein resides in the nucleus. It localises to the cytoplasm. In terms of biological role, transcriptional repressor which forms a core component of the circadian clock. The circadian clock, an internal time-keeping system, regulates various physiological processes through the generation of approximately 24 hour circadian rhythms in gene expression, which are translated into rhythms in metabolism and behavior. It is derived from the Latin roots 'circa' (about) and 'diem' (day) and acts as an important regulator of a wide array of physiological functions including metabolism, sleep, body temperature, blood pressure, endocrine, immune, cardiovascular, and renal function. Consists of two major components: the central clock, residing in the suprachiasmatic nucleus (SCN) of the brain, and the peripheral clocks that are present in nearly every tissue and organ system. Both the central and peripheral clocks can be reset by environmental cues, also known as Zeitgebers (German for 'timegivers'). The predominant Zeitgeber for the central clock is light, which is sensed by retina and signals directly to the SCN. The central clock entrains the peripheral clocks through neuronal and hormonal signals, body temperature and feeding-related cues, aligning all clocks with the external light/dark cycle. Circadian rhythms allow an organism to achieve temporal homeostasis with its environment at the molecular level by regulating gene expression to create a peak of protein expression once every 24 hours to control when a particular physiological process is most active with respect to the solar day. Transcription and translation of core clock components (CLOCK, NPAS2, BMAL1, BMAL2, PER1, PER2, PER3, CRY1 and CRY2) plays a critical role in rhythm generation, whereas delays imposed by post-translational modifications (PTMs) are important for determining the period (tau) of the rhythms (tau refers to the period of a rhythm and is the length, in time, of one complete cycle). A diurnal rhythm is synchronized with the day/night cycle, while the ultradian and infradian rhythms have a period shorter and longer than 24 hours, respectively. Disruptions in the circadian rhythms contribute to the pathology of cardiovascular diseases, cancer, metabolic syndrome and aging. A transcription/translation feedback loop (TTFL) forms the core of the molecular circadian clock mechanism. Transcription factors, CLOCK or NPAS2 and BMAL1 or BMAL2, form the positive limb of the feedback loop, act in the form of a heterodimer and activate the transcription of core clock genes and clock-controlled genes (involved in key metabolic processes), harboring E-box elements (5'-CACGTG-3') within their promoters. The core clock genes: PER1/2/3 and CRY1/2 which are transcriptional repressors form the negative limb of the feedback loop and interact with the CLOCK|NPAS2-BMAL1|BMAL2 heterodimer inhibiting its activity and thereby negatively regulating their own expression. This heterodimer also activates nuclear receptors NR1D1/2 and RORA/B/G, which form a second feedback loop and which activate and repress BMAL1 transcription, respectively. PER1 and PER2 proteins transport CRY1 and CRY2 into the nucleus with appropriate circadian timing, but also contribute directly to repression of clock-controlled target genes through interaction with several classes of RNA-binding proteins, helicases and others transcriptional repressors. PER appears to regulate circadian control of transcription by at least three different modes. First, interacts directly with the CLOCK-BMAL1 at the tail end of the nascent transcript peak to recruit complexes containing the SIN3-HDAC that remodel chromatin to repress transcription. Second, brings H3K9 methyltransferases such as SUV39H1 and SUV39H2 to the E-box elements of the circadian target genes, like PER2 itself or PER1. The recruitment of each repressive modifier to the DNA seems to be very precisely temporally orchestrated by the large PER complex, the deacetylases acting before than the methyltransferases. Additionally, large PER complexes are also recruited to the target genes 3' termination site through interactions with RNA-binding proteins and helicases that may play a role in transcription termination to regulate transcription independently of CLOCK-BMAL1 interactions. This chain is Period circadian protein homolog 2 (PER2), found in Gallus gallus (Chicken).